Consider the following 650-residue polypeptide: Flap endonuclease 1 (650 aa).

An N-domain region spans residues 1 to 106 (MGIKGLTKFI…SELEKRGEKR (106 aa)). Position 34 (Asp-34) interacts with Mg(2+). The DNA site is built by Arg-47 and Arg-72. 5 residues coordinate Mg(2+): Asp-88, Glu-160, Glu-162, Asp-181, and Asp-183. Positions 124 to 266 (EIKKQSGRTV…KTAYNLIKEY (143 aa)) are I-domain. Glu-160 lines the DNA pocket. The DNA site is built by Gly-244 and Asp-246. Asp-246 contacts Mg(2+). The interval 349-357 (TQRRLDNFF) is interaction with PCNA. The tract at residues 371–592 (ETKKEQTLPA…NSYNNIKNNN (222 aa)) is disordered. Composition is skewed to basic and acidic residues over residues 413 to 469 (MKEE…KKSL), 478 to 502 (DSDKESESGNIIKNEKQNMDDEKIN), and 511 to 524 (DHSRIRHTENKDNI). Over residues 525-562 (SDINNNNNNNNNNSSSNNNNISNNHFNSVSSNSTFNSS) the composition is skewed to low complexity. Residues 565–581 (LKSEDTLKSNSPLKEDS) show a composition bias toward basic and acidic residues. Residues 582–592 (PNSYNNIKNNN) show a composition bias toward low complexity.

Belongs to the XPG/RAD2 endonuclease family. FEN1 subfamily. As to quaternary structure, interacts with PCNA1 and PCNA2. Three molecules of FEN1 bind to one PCNA trimer with each molecule binding to one PCNA monomer. PCNA stimulates the nuclease activity without altering cleavage specificity. Mg(2+) serves as cofactor. In terms of processing, phosphorylated. Phosphorylation upon DNA damage induces relocalization to the nuclear plasma.

It is found in the nucleus. The protein resides in the nucleolus. Its subcellular location is the nucleoplasm. It localises to the mitochondrion. Inhibited by monovalent metal ions. In terms of biological role, structure-specific nuclease with 5'-flap endonuclease and 5'-3' exonuclease activities involved in DNA replication and repair. During DNA replication, cleaves the 5'-overhanging flap structure that is generated by displacement synthesis when DNA polymerase encounters the 5'-end of a downstream Okazaki fragment. It enters the flap from the 5'-end and then tracks to cleave the flap base, leaving a nick for ligation. Also involved in the long patch base excision repair (LP-BER) pathway, by cleaving within the apurinic/apyrimidinic (AP) site-terminated flap. Acts as a genome stabilization factor that prevents flaps from equilibrating into structures that lead to duplications and deletions. Also possesses 5'-3' exonuclease activity on nicked or gapped double-stranded DNA, and exhibits RNase H activity. Also involved in replication and repair of rDNA and in repairing mitochondrial DNA. This is Flap endonuclease 1 from Plasmodium falciparum.